Reading from the N-terminus, the 84-residue chain is UPF0291 protein EUBELI_00985 (84 aa).

Belongs to the UPF0291 family.

The protein resides in the cytoplasm. This is UPF0291 protein EUBELI_00985 from Lachnospira eligens (strain ATCC 27750 / DSM 3376 / VPI C15-48 / C15-B4) (Eubacterium eligens).